A 731-amino-acid polypeptide reads, in one-letter code: 1,4-alpha-glucan branching enzyme GlgB 2 (731 aa).

D410 acts as the Nucleophile in catalysis. The Proton donor role is filled by E463.

Belongs to the glycosyl hydrolase 13 family. GlgB subfamily. Monomer.

The enzyme catalyses Transfers a segment of a (1-&gt;4)-alpha-D-glucan chain to a primary hydroxy group in a similar glucan chain.. It functions in the pathway glycan biosynthesis; glycogen biosynthesis. Catalyzes the formation of the alpha-1,6-glucosidic linkages in glycogen by scission of a 1,4-alpha-linked oligosaccharide from growing alpha-1,4-glucan chains and the subsequent attachment of the oligosaccharide to the alpha-1,6 position. This chain is 1,4-alpha-glucan branching enzyme GlgB 2, found in Xanthomonas oryzae pv. oryzae (strain MAFF 311018).